We begin with the raw amino-acid sequence, 385 residues long: UPF0764 protein C16orf89 homolog (385 aa).

The signal sequence occupies residues Met-1–Ser-20. Residues Ala-344–Ser-385 are disordered. A compositionally biased stretch (polar residues) spans Tyr-356 to Gln-367.

It belongs to the UPF0764 family. Homodimer. Post-translationally, glycosylated. As to expression, predominantly expressed in thyroid tissue.

It localises to the secreted. The sequence is that of UPF0764 protein C16orf89 homolog from Mus musculus (Mouse).